Here is an 855-residue protein sequence, read N- to C-terminus: Vomeronasal type-2 receptor 26 (855 aa).

The N-terminal stretch at methionine 1–cysteine 22 is a signal peptide. Residues tyrosine 23–threonine 595 are Extracellular-facing. Residues asparagine 101 and asparagine 295 are each glycosylated (N-linked (GlcNAc...) asparagine). The helical transmembrane segment at valine 596–isoleucine 616 threads the bilayer. Residues cysteine 617 to asparagine 630 are Cytoplasmic-facing. A helical membrane pass occupies residues leucine 631–glycine 651. Residues glutamine 652–glutamine 662 are Extracellular-facing. The helical transmembrane segment at isoleucine 663–valine 683 threads the bilayer. Topologically, residues valine 684 to asparagine 706 are cytoplasmic. The helical transmembrane segment at alanine 707–tyrosine 727 threads the bilayer. At proline 728–alanine 753 the chain is on the extracellular side. The chain crosses the membrane as a helical span at residues phenylalanine 754–leucine 774. Topologically, residues alanine 775–lysine 786 are cytoplasmic. The chain crosses the membrane as a helical span at residues threonine 787–leucine 807. At serine 808–methionine 814 the chain is on the extracellular side. Residues valine 815–leucine 835 traverse the membrane as a helical segment. Topologically, residues proline 836–lysine 855 are cytoplasmic.

The protein belongs to the G-protein coupled receptor 3 family. In terms of tissue distribution, expressed in the basal epithelium of the vomeronasal organ. Located to vomeronasal sensory neurons that project their axons to six to ten glomeruli that reside in globally conserved areas within the caudal accessory olfactory bulb (AOB).

Its subcellular location is the cell membrane. Its function is as follows. Putative pheromone receptor. The chain is Vomeronasal type-2 receptor 26 (Vmn2r26) from Mus musculus (Mouse).